The primary structure comprises 228 residues: uncharacterized protein (228 aa).

4 consecutive transmembrane segments (helical) span residues 37–54 (WCMHASLTLVLLALTLIV), 67–89 (VVSIYLAFFFSLKILHTFFSTGV), 104–126 (HIGIRLFLLLCASSLFYACTSRL), and 138–160 (VLHVRSTAYTTPCAVYVMMLVLY).

The protein localises to the cell membrane. This is an uncharacterized protein from Treponema pallidum (strain Nichols).